The sequence spans 1888 residues: Nuclear pore membrane glycoprotein 210-like (1888 aa).

Positions 1-35 (MTGCPASSRRRGFGLFFFLRLHRLLLLFLVLRGTL) are cleaved as a signal peptide. Residues N84, N304, N348, N495, N522, N812, and N931 are each glycosylated (N-linked (GlcNAc...) asparagine). Residues 1082-1154 (FPPFRLLPEK…TIQTVNEDTG (73 aa)) enclose the BIG2 domain. N-linked (GlcNAc...) asparagine glycosylation occurs at N1445. The helical transmembrane segment at 1813-1833 (ILLLTLFAVLASTASIFLAYN) threads the bilayer. N1859 carries an N-linked (GlcNAc...) asparagine glycan.

This sequence belongs to the NUP210 family.

The protein resides in the nucleus membrane. This is Nuclear pore membrane glycoprotein 210-like (NUP210L) from Homo sapiens (Human).